The chain runs to 355 residues: Anhydro-N-acetylmuramic acid kinase (355 aa).

9–16 (GTSLDGVD) is a binding site for ATP.

Belongs to the anhydro-N-acetylmuramic acid kinase family.

It carries out the reaction 1,6-anhydro-N-acetyl-beta-muramate + ATP + H2O = N-acetyl-D-muramate 6-phosphate + ADP + H(+). The protein operates within amino-sugar metabolism; 1,6-anhydro-N-acetylmuramate degradation. It participates in cell wall biogenesis; peptidoglycan recycling. In terms of biological role, catalyzes the specific phosphorylation of 1,6-anhydro-N-acetylmuramic acid (anhMurNAc) with the simultaneous cleavage of the 1,6-anhydro ring, generating MurNAc-6-P. Is required for the utilization of anhMurNAc either imported from the medium or derived from its own cell wall murein, and thus plays a role in cell wall recycling. The protein is Anhydro-N-acetylmuramic acid kinase of Paramagnetospirillum magneticum (strain ATCC 700264 / AMB-1) (Magnetospirillum magneticum).